The sequence spans 429 residues: Ribosomal RNA small subunit methyltransferase B (429 aa).

Residues 254–260 (CAAPGGK), Asp-277, Asp-303, and Asp-322 each bind S-adenosyl-L-methionine. The Nucleophile role is filled by Cys-375.

This sequence belongs to the class I-like SAM-binding methyltransferase superfamily. RsmB/NOP family.

Its subcellular location is the cytoplasm. It catalyses the reaction cytidine(967) in 16S rRNA + S-adenosyl-L-methionine = 5-methylcytidine(967) in 16S rRNA + S-adenosyl-L-homocysteine + H(+). Functionally, specifically methylates the cytosine at position 967 (m5C967) of 16S rRNA. The protein is Ribosomal RNA small subunit methyltransferase B of Escherichia fergusonii (strain ATCC 35469 / DSM 13698 / CCUG 18766 / IAM 14443 / JCM 21226 / LMG 7866 / NBRC 102419 / NCTC 12128 / CDC 0568-73).